A 187-amino-acid polypeptide reads, in one-letter code: Peptidyl-tRNA hydrolase (187 aa).

Position 14 (Y14) interacts with tRNA. H19 acts as the Proton acceptor in catalysis. Positions 64, 66, and 112 each coordinate tRNA.

The protein belongs to the PTH family. Monomer.

It localises to the cytoplasm. The catalysed reaction is an N-acyl-L-alpha-aminoacyl-tRNA + H2O = an N-acyl-L-amino acid + a tRNA + H(+). Functionally, hydrolyzes ribosome-free peptidyl-tRNAs (with 1 or more amino acids incorporated), which drop off the ribosome during protein synthesis, or as a result of ribosome stalling. Its function is as follows. Catalyzes the release of premature peptidyl moieties from peptidyl-tRNA molecules trapped in stalled 50S ribosomal subunits, and thus maintains levels of free tRNAs and 50S ribosomes. The chain is Peptidyl-tRNA hydrolase from Bdellovibrio bacteriovorus (strain ATCC 15356 / DSM 50701 / NCIMB 9529 / HD100).